A 555-amino-acid polypeptide reads, in one-letter code: Perforin-1 (555 aa).

An N-terminal signal peptide occupies residues 1-21 (MAARLLLLGILLLLLPLPVPA). Intrachain disulfides connect Cys-23–Cys-76, Cys-31–Cys-73, and Cys-102–Cys-176. Positions 27 to 375 (ARSECKRSHK…QYLTDRARWR (349 aa)) constitute an MACPF domain. Residues 129-149 (WKVGLDVTPKPTSNVHVSVAG) form a beta stranded membrane-spanning segment. The N-linked (GlcNAc...) asparagine glycan is linked to Asn-205. Cystine bridges form between Cys-242-Cys-408, Cys-377-Cys-393, Cys-381-Cys-395, and Cys-397-Cys-407. The chain crosses the membrane as a beta stranded span at residues 257 to 279 (CLTVEAQVNIGIHGSISAEAKAC). Residues 376-408 (DCSRPCPPGRQKSPRDPCQCVCHGSAVTTQDCC) form the EGF-like domain. In terms of domain architecture, C2 spans 397–519 (CHGSAVTTQD…CNLNHGHLKF (123 aa)). Residues Gly-429, Asp-430, Thr-433, Ala-434, Asp-436, Asp-484, Asp-486, Asp-490, Asp-491, and Asp-492 each coordinate Ca(2+). 2 disulfide bridges follow: Cys-497–Cys-510 and Cys-525–Cys-534. Residue Asn-549 is glycosylated (N-linked (GlcNAc...) asparagine).

Belongs to the complement C6/C7/C8/C9 family. Monomer, as soluble protein. Homooligomer; homooligomerizes to form a pore-forming ring. The cofactor is Ca(2+). N-glycosylated.

The protein resides in the cytolytic granule. Its subcellular location is the secreted. The protein localises to the cell membrane. It localises to the endosome lumen. Pore-forming protein that plays a key role in granzyme-mediated programmed cell death, and in defense against virus-infected or neoplastic cells. Plays an important role in killing other cells that are recognized as non-self by the immune system, e.g. in transplant rejection or some forms of autoimmune disease. Can insert into the membrane of target cells in its calcium-bound form, oligomerize and form large pores. Promotes cytolysis and apoptosis of target cells by mediating the passage and uptake of cytotoxic granzymes. Facilitates the delivery of cationic cargo protein, while anionic or neural proteins are not delivered efficiently. Perforin pores allow the release of mature caspase-7 (CASP7) into the extracellular milieu. This is Perforin-1 (PRF1) from Homo sapiens (Human).